A 451-amino-acid polypeptide reads, in one-letter code: Trigger factor (451 aa).

Residues 173 to 258 (GDRVTLDFVG…LKKIEWAHLP (86 aa)) enclose the PPIase FKBP-type domain.

Belongs to the FKBP-type PPIase family. Tig subfamily.

The protein localises to the cytoplasm. It carries out the reaction [protein]-peptidylproline (omega=180) = [protein]-peptidylproline (omega=0). Involved in protein export. Acts as a chaperone by maintaining the newly synthesized protein in an open conformation. Functions as a peptidyl-prolyl cis-trans isomerase. The sequence is that of Trigger factor from Cupriavidus pinatubonensis (strain JMP 134 / LMG 1197) (Cupriavidus necator (strain JMP 134)).